A 440-amino-acid polypeptide reads, in one-letter code: Origin recognition complex subunit 4 (440 aa).

64 to 71 (GPKGSGKS) is a binding site for ATP.

Belongs to the ORC4 family. ORC is composed of six subunits.

Its subcellular location is the nucleus. Its function is as follows. Component of the origin recognition complex (ORC) that binds origins of replication. DNA-binding is ATP-dependent, however specific DNA sequences that define origins of replication have not been identified so far. ORC is required to assemble the pre-replication complex necessary to initiate DNA replication. In Dictyostelium discoideum (Social amoeba), this protein is Origin recognition complex subunit 4 (orcD).